Reading from the N-terminus, the 203-residue chain is Large ribosomal subunit protein bL25 (203 aa).

This sequence belongs to the bacterial ribosomal protein bL25 family. CTC subfamily. Part of the 50S ribosomal subunit; part of the 5S rRNA/L5/L18/L25 subcomplex. Contacts the 5S rRNA. Binds to the 5S rRNA independently of L5 and L18.

This is one of the proteins that binds to the 5S RNA in the ribosome where it forms part of the central protuberance. The sequence is that of Large ribosomal subunit protein bL25 from Wolbachia pipientis subsp. Culex pipiens (strain wPip).